Reading from the N-terminus, the 263-residue chain is Palmitoyltransferase ZDHHC22 (263 aa).

Topologically, residues 1–9 (MLALRLLNV) are cytoplasmic. A helical transmembrane segment spans residues 10-30 (VAPAYFLCISLVTFVLQLFLF). Topologically, residues 31–48 (LPSMREDPTATPLFSPAV) are lumenal. Residues 49-69 (LHGALFLFLSANALGNYVLVI) traverse the membrane as a helical segment. At 70–125 (QNSPDDLGTCQGTMSQRPQCPPPSTHFCRVCSRVTLRHDHHCFFTGNCIGSRNMRN) the chain is on the cytoplasmic side. A DHHC domain is found at 91–131 (PPSTHFCRVCSRVTLRHDHHCFFTGNCIGSRNMRNFILFCL). Cysteine 111 (S-palmitoyl cysteine intermediate) is an active-site residue. 2 consecutive transmembrane segments (helical) span residues 126–146 (FILF…AGVA) and 147–167 (YISA…TLLP). Residues 168-182 (TSISQFFSGAVLGSD) lie on the Cytoplasmic side of the membrane. Residues 183–203 (MFVILMLYLWFAVGLACAGFC) form a helical membrane-spanning segment. Topologically, residues 204–263 (CHQLLLILRGQTRYQVRKGMAVRARPWRKNLQEVFGKRWLLGLLVPMFNVGTESSKQQDK) are lumenal.

It belongs to the DHHC palmitoyltransferase family. Interacts with CNN3.

It is found in the endoplasmic reticulum membrane. The protein localises to the golgi apparatus membrane. The catalysed reaction is L-cysteinyl-[protein] + hexadecanoyl-CoA = S-hexadecanoyl-L-cysteinyl-[protein] + CoA. Functionally, palmitoyltransferase that could catalyze the addition of palmitate onto various protein substrates and be involved in a variety of cellular processes. Catalyzes the palmitoylation of KCNMA1, regulating localization of KCNMA1 to the plasma membrane. Might also mediate palmitoylation of CNN3. The protein is Palmitoyltransferase ZDHHC22 of Mus musculus (Mouse).